The following is a 152-amino-acid chain: Large ribosomal subunit protein uL30 (152 aa).

This sequence belongs to the universal ribosomal protein uL30 family. In terms of assembly, part of the 50S ribosomal subunit.

This chain is Large ribosomal subunit protein uL30, found in Archaeoglobus fulgidus (strain ATCC 49558 / DSM 4304 / JCM 9628 / NBRC 100126 / VC-16).